A 241-amino-acid polypeptide reads, in one-letter code: Small ribosomal subunit protein uS3 (241 aa).

Positions 39–109 (VRNYVNKNLS…PIRINVVEVA (71 aa)) constitute a KH type-2 domain. The interval 213 to 241 (ADEQPTNREPQQRRRQQQRRRQQFEDRSE) is disordered.

This sequence belongs to the universal ribosomal protein uS3 family. Part of the 30S ribosomal subunit. Forms a tight complex with proteins S10 and S14.

Binds the lower part of the 30S subunit head. Binds mRNA in the 70S ribosome, positioning it for translation. In Acaryochloris marina (strain MBIC 11017), this protein is Small ribosomal subunit protein uS3.